The chain runs to 192 residues: Xanthine phosphoribosyltransferase (192 aa).

Xanthine is bound by residues L20 and N27. 128–132 (ADGEA) lines the 5-phospho-alpha-D-ribose 1-diphosphate pocket. K156 contributes to the xanthine binding site.

It belongs to the purine/pyrimidine phosphoribosyltransferase family. Xpt subfamily. As to quaternary structure, homodimer.

It is found in the cytoplasm. The catalysed reaction is XMP + diphosphate = xanthine + 5-phospho-alpha-D-ribose 1-diphosphate. Its pathway is purine metabolism; XMP biosynthesis via salvage pathway; XMP from xanthine: step 1/1. Its function is as follows. Converts the preformed base xanthine, a product of nucleic acid breakdown, to xanthosine 5'-monophosphate (XMP), so it can be reused for RNA or DNA synthesis. This is Xanthine phosphoribosyltransferase from Agathobacter rectalis (strain ATCC 33656 / DSM 3377 / JCM 17463 / KCTC 5835 / VPI 0990) (Eubacterium rectale).